The chain runs to 185 residues: MIAMNNKLAQPYAMAFLEFSLDAKQTLDTTIADLTQIKTILHDSVDLSKTLSNPLLSIKAKKEVIKAIFEPNISKNTLKFLLVLCDRGRSANLSSIIDNTIELAYKKASIEIAYVTTATAFSSNQQEALVEKLKSMTSTEQIKLNITVDKTLIGGFKVQIGSKVIDTSIQGQLRQLASHLGSSAI.

Belongs to the ATPase delta chain family. F-type ATPases have 2 components, F(1) - the catalytic core - and F(0) - the membrane proton channel. F(1) has five subunits: alpha(3), beta(3), gamma(1), delta(1), epsilon(1). CF(0) has four main subunits: a(1), b(1), b'(1) and c(10-14). The alpha and beta chains form an alternating ring which encloses part of the gamma chain. F(1) is attached to F(0) by a central stalk formed by the gamma and epsilon chains, while a peripheral stalk is formed by the delta, b and b' chains.

It is found in the plastid. The protein localises to the chloroplast thylakoid membrane. Functionally, f(1)F(0) ATP synthase produces ATP from ADP in the presence of a proton or sodium gradient. F-type ATPases consist of two structural domains, F(1) containing the extramembraneous catalytic core and F(0) containing the membrane proton channel, linked together by a central stalk and a peripheral stalk. During catalysis, ATP synthesis in the catalytic domain of F(1) is coupled via a rotary mechanism of the central stalk subunits to proton translocation. Its function is as follows. This protein is part of the stalk that links CF(0) to CF(1). It either transmits conformational changes from CF(0) to CF(1) or is implicated in proton conduction. The sequence is that of ATP synthase subunit delta, chloroplastic from Guillardia theta (Cryptophyte).